The primary structure comprises 172 residues: Adenine phosphoribosyltransferase (172 aa).

It belongs to the purine/pyrimidine phosphoribosyltransferase family. In terms of assembly, homodimer.

It is found in the cytoplasm. The catalysed reaction is AMP + diphosphate = 5-phospho-alpha-D-ribose 1-diphosphate + adenine. Its pathway is purine metabolism; AMP biosynthesis via salvage pathway; AMP from adenine: step 1/1. Its function is as follows. Catalyzes a salvage reaction resulting in the formation of AMP, that is energically less costly than de novo synthesis. This is Adenine phosphoribosyltransferase from Desulforamulus reducens (strain ATCC BAA-1160 / DSM 100696 / MI-1) (Desulfotomaculum reducens).